Consider the following 162-residue polypeptide: Protein snakeskin (162 aa).

At 2–6 (VSVET) the chain is on the cytoplasmic side. The chain crosses the membrane as a helical span at residues 7–27 (VGSIFIKALKLIINLVIIFLY). Residues 28 to 53 (RWGDGGEFLGIGGTWNLNEEKSADAE) lie on the Extracellular side of the membrane. Residues 54–74 (IVASGVMVGFLIYTGCHTIAF) form a helical membrane-spanning segment. At 75–88 (AFGTTKHKGELCDT) the chain is on the cytoplasmic side. The helical transmembrane segment at 89-109 (IMNVVGCIMWIAVGGVALHYW) threads the bilayer. At 110–128 (KGYMSDEGFLYVNSERQVG) the chain is on the extracellular side. A helical membrane pass occupies residues 129–149 (IAMGSLCVIEGALYLLDTVLA). Residues 150–162 (CIHYSKGDTDYTQ) lie on the Cytoplasmic side of the membrane.

Forms a complex with Tsp2A and mesh. Interacts with mesh; the interaction may be necessary for the localization of both proteins to the cell apicolateral region.

It is found in the apicolateral cell membrane. The protein localises to the cell junction. The protein resides in the septate junction. In terms of biological role, required for assembly of smooth septate junctions (sSJs), together with mesh and Tsp2A. May be important for barrier function of the midgut epithelium. The protein is Protein snakeskin of Drosophila melanogaster (Fruit fly).